A 147-amino-acid polypeptide reads, in one-letter code: MRKYETFFIIDPDLPDEVTAAVDEKIKSVVGANGGDVVSYVPWGKKKLAYPVKKRSRGLYVLMEYAGDSRLVAELERNMRLDERVLKFITVKLDDRYDPEKEAARMAANLPSFPEDEDTEEKGSAPLAREEEGIGEEAQTDEAEDKE.

A disordered region spans residues 103 to 147 (AARMAANLPSFPEDEDTEEKGSAPLAREEEGIGEEAQTDEAEDKE). Residues 133 to 147 (GIGEEAQTDEAEDKE) are compositionally biased toward acidic residues.

This sequence belongs to the bacterial ribosomal protein bS6 family.

In terms of biological role, binds together with bS18 to 16S ribosomal RNA. This chain is Small ribosomal subunit protein bS6, found in Syntrophobacter fumaroxidans (strain DSM 10017 / MPOB).